A 386-amino-acid chain; its full sequence is Putative prophage major tail sheath protein (386 aa).

It belongs to the myoviridae tail sheath protein family.

The protein localises to the secreted. The sequence is that of Putative prophage major tail sheath protein from Pseudomonas aeruginosa (strain UCBPP-PA14).